The chain runs to 214 residues: Thymidylate kinase (214 aa).

12-19 (GLDGSGKS) is an ATP binding site.

Belongs to the thymidylate kinase family.

It carries out the reaction dTMP + ATP = dTDP + ADP. In terms of biological role, phosphorylation of dTMP to form dTDP in both de novo and salvage pathways of dTTP synthesis. The sequence is that of Thymidylate kinase from Bdellovibrio bacteriovorus (strain ATCC 15356 / DSM 50701 / NCIMB 9529 / HD100).